The chain runs to 362 residues: D-alanine--D-alanine ligase (362 aa).

The ATP-grasp domain occupies 141–346 (KNIFAEAGLN…YPELIEELIR (206 aa)). Residue 174 to 229 (EEALGYPCFVKPANLGSSVGINKCKDREELEKAFEEAFQFDRKIIVEENIIGREVE) coordinates ATP. 3 residues coordinate Mg(2+): Asp300, Glu313, and Asn315.

Belongs to the D-alanine--D-alanine ligase family. Mg(2+) serves as cofactor. The cofactor is Mn(2+).

Its subcellular location is the cytoplasm. It carries out the reaction 2 D-alanine + ATP = D-alanyl-D-alanine + ADP + phosphate + H(+). It functions in the pathway cell wall biogenesis; peptidoglycan biosynthesis. Cell wall formation. The polypeptide is D-alanine--D-alanine ligase (Bacillus cytotoxicus (strain DSM 22905 / CIP 110041 / 391-98 / NVH 391-98)).